Reading from the N-terminus, the 585-residue chain is Arginine--tRNA ligase (585 aa).

Positions 131–141 (ANPTGPMHVGH) match the 'HIGH' region motif.

It belongs to the class-I aminoacyl-tRNA synthetase family. In terms of assembly, monomer.

The protein resides in the cytoplasm. It carries out the reaction tRNA(Arg) + L-arginine + ATP = L-arginyl-tRNA(Arg) + AMP + diphosphate. The chain is Arginine--tRNA ligase from Rhizobium etli (strain CIAT 652).